Consider the following 514-residue polypeptide: Exoglucanase 1 (514 aa).

The signal sequence occupies residues 1 to 17; it reads MYQKLALISAFLATARA. The catalytic stretch occupies residues 18–453; the sequence is QSACTLQAET…GSTGNSSGGN (436 aa). Disulfide bonds link cysteine 21/cysteine 89, cysteine 36/cysteine 42, cysteine 67/cysteine 88, cysteine 78/cysteine 84, cysteine 155/cysteine 414, cysteine 189/cysteine 227, cysteine 193/cysteine 226, cysteine 247/cysteine 273, cysteine 255/cysteine 260, and cysteine 278/cysteine 348. Residues asparagine 62 and asparagine 81 are each glycosylated (N-linked (GlcNAc...) asparagine). Glutamate 229 serves as the catalytic Nucleophile. Catalysis depends on glutamate 234, which acts as the Proton donor. Asparagine 287 carries N-linked (GlcNAc...) asparagine glycosylation. Disordered regions lie at residues 401–427 and 444–481; these read NETSSTPGAVRGSCSTSSGVPAQLESN and GSTGNSSGGNPPGGNPPGTTTTRRPATSTGSSPGPTQT. The segment at 454–478 is linker; that stretch reads PPGGNPPGTTTTRRPATSTGSSPGP. Positions 460 to 479 are enriched in low complexity; it reads PGTTTTRRPATSTGSSPGPT. The CBM1 domain occupies 478–514; it reads PTQTHYGQCGGIGYSGPTVCASGSTCQVLNPYYSQCL. 2 disulfides stabilise this stretch: cysteine 486–cysteine 503 and cysteine 497–cysteine 513.

The protein belongs to the glycosyl hydrolase 7 (cellulase C) family.

The enzyme catalyses Hydrolysis of (1-&gt;4)-beta-D-glucosidic linkages in cellulose and cellotetraose, releasing cellobiose from the non-reducing ends of the chains.. Its function is as follows. The biological conversion of cellulose to glucose generally requires three types of hydrolytic enzymes: (1) Endoglucanases which cut internal beta-1,4-glucosidic bonds; (2) Exocellobiohydrolases that cut the disaccharide cellobiose from the non-reducing end of the cellulose polymer chain; (3) Beta-1,4-glucosidases which hydrolyze the cellobiose and other short cello-oligosaccharides to glucose. This is Exoglucanase 1 (cbh1) from Hypocrea rufa (Trichoderma viride).